The sequence spans 2043 residues: Autophagy-related protein 2 (2043 aa).

Disordered stretches follow at residues 111 to 130 (EKDR…SEAV), 288 to 341 (SASM…LPQS), 353 to 392 (IPYD…TDHA), 413 to 458 (SVPF…SHIY), 469 to 488 (SAFS…GAWD), 493 to 563 (AEES…PRGP), 839 to 863 (TSRA…EPVH), and 1370 to 1400 (YDLD…SDSP). Residues 288 to 306 (SASMPSSSASRSPVAPRSP) are compositionally biased toward low complexity. Positions 308–325 (DNETTAFNPSGLSRSVGS) are enriched in polar residues. Positions 434 to 447 (SVHSSSTNRSSGSS) are enriched in low complexity. Residues 448–458 (ARDDLAESHIY) are compositionally biased toward basic and acidic residues. Over residues 470-479 (AFSQTGSQGL) the composition is skewed to polar residues. A compositionally biased stretch (pro residues) spans 517-527 (PPQPDRIPSPE). Over residues 528-546 (QPSQDQKRNSPSFYAQDSS) the composition is skewed to polar residues. Residues 1370 to 1392 (YDLDNDFDVPQELGDDADSDLDF) show a composition bias toward acidic residues.

Belongs to the ATG2 family.

The protein resides in the preautophagosomal structure membrane. Its subcellular location is the endoplasmic reticulum membrane. It catalyses the reaction a 1,2-diacyl-sn-glycero-3-phosphocholine(in) = a 1,2-diacyl-sn-glycero-3-phosphocholine(out). The catalysed reaction is a 1,2-diacyl-sn-glycero-3-phospho-L-serine(in) = a 1,2-diacyl-sn-glycero-3-phospho-L-serine(out). It carries out the reaction a 1,2-diacyl-sn-glycero-3-phosphoethanolamine(in) = a 1,2-diacyl-sn-glycero-3-phosphoethanolamine(out). Its function is as follows. Lipid transfer protein required for autophagosome completion and peroxisome degradation. Tethers the edge of the isolation membrane (IM) to the endoplasmic reticulum (ER) and mediates direct lipid transfer from ER to IM for IM expansion. ATG2 binds to the ER exit site (ERES), which is the membrane source for autophagosome formation, using basic residues in its N-terminal region (NR) and to the expanding edge of the IM through its C-terminal region. The latter binding is assisted by an ATG18-PtdIns3P interaction. ATG2 then extracts phospholipids from the membrane source using its NR and transfers them to ATG9 to the IM through its predicted beta-sheet-rich structure for membrane expansion. The polypeptide is Autophagy-related protein 2 (ATG2) (Chaetomium globosum (strain ATCC 6205 / CBS 148.51 / DSM 1962 / NBRC 6347 / NRRL 1970) (Soil fungus)).